Reading from the N-terminus, the 274-residue chain is Undecaprenyl-diphosphatase (274 aa).

7 helical membrane-spanning segments follow: residues 40 to 60, 90 to 110, 114 to 134, 147 to 167, 190 to 210, 221 to 241, and 252 to 272; these read PGAA…LMFF, WFII…KDVI, FRSL…LGVA, ISLR…IPGV, YAFL…LKDI, PTIV…AWLL, and FVLY…TGVI.

The protein belongs to the UppP family.

Its subcellular location is the cell membrane. It catalyses the reaction di-trans,octa-cis-undecaprenyl diphosphate + H2O = di-trans,octa-cis-undecaprenyl phosphate + phosphate + H(+). Catalyzes the dephosphorylation of undecaprenyl diphosphate (UPP). Confers resistance to bacitracin. The protein is Undecaprenyl-diphosphatase of Nocardioides sp. (strain ATCC BAA-499 / JS614).